The following is an 853-amino-acid chain: MSAIENFDAHTPMMQQYLRLKAQHPEILLFYRMGDFYELFYDDAKRASQLLDISLTKRGASAGEPIPMAGIPYHAVENYLAKLVNQGESVAICEQIGDPATSKGPVERKVVRIVTPGTISDEALLQERQDNLLAAIWQDSKGFGYATLDISSGRFRLSEPADRETMAAELQRTNPAELLYAEDFAEMSLIEGRRGLRRRPLWEFEIDTARQQLNLQFGTRDLVGFGVENAPRGLCAAGCLLQYAKDTQRTTLPHIRSITMEREQDSIIMDAATRRNLEITQNLAGGAENTLASVLDCTVTPMGSRMLKRWLHMPVRDTRVLLERQQTIGALQDFTAGLQPVLRQVGDLERILARLALRTARPRDLARMRHAFQQLPELRAQLETVDSAPVQALREKMGEFAELRDLLERAIIDTPPVLVRDGGVIASGYNEELDEWRALADGATDYLERLEVRERERTGLDTLKVGFNAVHGYYIQISRGQSHLAPINYMRRQTLKNAERYIIPELKEYEDKVLTSKGKALALEKQLYEELFDLLLPHLEALQQSASALAELDVLVNLAERAYTLNYTCPTFIDKPGIRITEGRHPVVEQVLNEPFIANPLNLSPQRRMLIITGPNMGGKSTYMRQTALIALMAYIGSYVPAQKVEIGPIDRIFTRVGAADDLASGRSTFMVEMTETANILHNATEYSLVLMDEIGRGTSTYDGLSLAWACAENLANKIKALTLFATHYFELTQLPEKMEGVANVHLDALEHGDTIAFMHSVQDGAASKSYGLAVAALAGVPKEVIKRARQKLRELESISPNAAATQVDGTQMSLLSVPEETSPAVEALENLDPDSLTPRQALEWIYRLKSLV.

Residue 614 to 621 (GPNMGGKS) coordinates ATP.

This sequence belongs to the DNA mismatch repair MutS family.

Functionally, this protein is involved in the repair of mismatches in DNA. It is possible that it carries out the mismatch recognition step. This protein has a weak ATPase activity. This chain is DNA mismatch repair protein MutS, found in Escherichia coli (strain K12 / MC4100 / BW2952).